We begin with the raw amino-acid sequence, 334 residues long: N-acetyl-gamma-glutamyl-phosphate reductase (334 aa).

Residue Cys-154 is part of the active site.

It belongs to the NAGSA dehydrogenase family. Type 1 subfamily.

The protein resides in the cytoplasm. It carries out the reaction N-acetyl-L-glutamate 5-semialdehyde + phosphate + NADP(+) = N-acetyl-L-glutamyl 5-phosphate + NADPH + H(+). Its pathway is amino-acid biosynthesis; L-arginine biosynthesis; N(2)-acetyl-L-ornithine from L-glutamate: step 3/4. Functionally, catalyzes the NADPH-dependent reduction of N-acetyl-5-glutamyl phosphate to yield N-acetyl-L-glutamate 5-semialdehyde. The chain is N-acetyl-gamma-glutamyl-phosphate reductase from Salmonella typhimurium (strain LT2 / SGSC1412 / ATCC 700720).